The sequence spans 284 residues: Ubiquinone biosynthesis protein COQ4, mitochondrial (284 aa).

Residues His165, Asp166, His169, and Glu181 each coordinate Zn(2+).

Belongs to the COQ4 family. In terms of assembly, component of a multi-subunit COQ enzyme complex, composed of at least COQ3, COQ4, COQ5, COQ6, COQ7 and COQ9. Zn(2+) is required as a cofactor.

It localises to the mitochondrion inner membrane. It catalyses the reaction a 4-hydroxy-3-methoxy-5-(all-trans-polyprenyl)benzoate + H(+) = a 2-methoxy-6-(all-trans-polyprenyl)phenol + CO2. Its pathway is cofactor biosynthesis; ubiquinone biosynthesis. In terms of biological role, lyase that catalyzes the C1-decarboxylation of 4-hydroxy-3-methoxy-5-(all-trans-polyprenyl)benzoic acid into 2-methoxy-6-(all-trans-polyprenyl)phenol during ubiquinone biosynthesis. In Ajellomyces dermatitidis (strain ER-3 / ATCC MYA-2586) (Blastomyces dermatitidis), this protein is Ubiquinone biosynthesis protein COQ4, mitochondrial.